Reading from the N-terminus, the 1247-residue chain is Structural polyprotein (1247 aa).

Residues 36–67 (RPAGQLAQLISAVSRLALRTVPQKPRRTRKIK) form a host transcription inhibition region. The disordered stretch occupies residues 54-103 (RTVPQKPRRTRKIKKQKQVKQEQQSTTNQKKKAPKQKQTQKKKRPGRRER). Basic residues-rich tracts occupy residues 59–71 (KPRR…KQKQ) and 82–100 (QKKK…RPGR). A Nuclear localization signal motif is present at residues 60-98 (PRRTRKIKKQKQVKQEQQSTTNQKKKAPKQKQTQKKKRP). The segment at 83-113 (KKKAPKQKQTQKKKRPGRRERMCMKIENDCI) is binding to the viral RNA. The interval 98–112 (PGRRERMCMKIENDC) is ribosome-binding. A disulfide bond links C112 and C127. In terms of domain architecture, Peptidase S3 spans 112–260 (CIFEVRHEGK…KITPEGSVEW (149 aa)). Residue H138 is the Charge relay system of the active site. The short motif at 143-153 (IDNADLAKLAF) is the Nuclear export signal element. Residues 154 to 159 (KRSSKY) are interaction with spike glycoprotein E2. The active-site Charge relay system is D160. Positions 182-192 (PEGYYNWHHGA) are dimerization of the capsid protein. The active-site Charge relay system is S212. Residues 218 to 222 (DNKGR) form a dimerization of the capsid protein region. The segment at 261–273 (SLALPVMCLLANT) is functions as an uncleaved signal peptide for the precursor of protein E3/E2. Intrachain disulfides connect C268-C277, C282-C286, C285-C317, C343-C449, C346-C352, C415-C429, C477-C590, C525-C549, and C527-C544. Residue N272 is glycosylated (N-linked (GlcNAc...) asparagine; by host). N-linked (GlcNAc...) asparagine; by host glycosylation is found at N587 and N669. The chain crosses the membrane as a helical span at residues 692–712 (IAVLAAASIVITSLVGLSLGM). Positions 715 to 719 (CARRR) are interaction with the capsid protein. Residues C720, C740, and C741 are each lipidated (S-palmitoyl cysteine; by host). Residues 720-740 (CITPYELTPGATIPFLLGVLC) form a helical membrane-spanning segment. The interval 720–740 (CITPYELTPGATIPFLLGVLC) is transient transmembrane before p62-6K protein processing. C720 and C741 are disulfide-bonded. The helical transmembrane segment at 763 to 783 (PLFWLQLLIPLSAAIVVCNCL) threads the bilayer. 4 disulfides stabilise this stretch: C857–C922, C870–C902, C871–C904, and C876–C886. The interval 892–909 (VYPFMWGGAYCFCDAENT) is E1 fusion peptide loop. N-linked (GlcNAc...) asparagine; by host glycosylation is found at N949 and N1078. Intrachain disulfides connect C1067–C1079, C1109–C1184, C1114–C1188, and C1136–C1178. The chain crosses the membrane as a helical span at residues 1224–1244 (GVGLVVAIAALILIIVLCVSF). C1241 carries S-palmitoyl cysteine; by host lipidation. Residue C1241 is the site of S-stearoyl cysteine; by host attachment.

Homodimer. Homomultimer. Interacts with host karyopherin KPNA4; this interaction allows the nuclear import of the viral capsid protein. Interacts with spike glycoprotein E2. Interacts with host IRAK1; the interaction leads to inhibition of IRAK1-dependent signaling. In terms of assembly, the precursor of protein E3/E2 and E1 form a heterodimer shortly after synthesis. As to quaternary structure, the precursor of protein E3/E2 and E1 form a heterodimer shortly after synthesis. Processing of the precursor of protein E3/E2 into E2 and E3 results in a heterodimer of the spike glycoproteins E2 and E1. Spike at virion surface are constituted of three E2-E1 heterodimers. After target cell attachment and endocytosis, E1 change conformation to form homotrimers. Interacts with 6K protein. Interacts with spike glycoprotein E1. Processing of the precursor of protein E3/E2 into E2 and E3 results in a heterodimer of the spike glycoproteins E2 and E1. Spike at virion surface are constituted of a trimer of E2-E1 heterodimers. Interacts with 6K protein. Interacts with host MXRA8; this interaction mediates virus entry. In terms of assembly, oligomer. Interacts with spike glycoprotein E1. Interacts with spike glycoprotein E2. In terms of processing, structural polyprotein: Specific enzymatic cleavages in vivo yield mature proteins. Capsid protein is auto-cleaved during polyprotein translation, unmasking a signal peptide at the N-terminus of the precursor of E3/E2. The remaining polyprotein is then targeted to the host endoplasmic reticulum, where host signal peptidase cleaves it into pE2, 6K and E1 proteins. pE2 is further processed to mature E3 and E2 by host furin in trans-Golgi vesicle. Palmitoylated via thioester bonds. These palmitoylations may induce disruption of the C-terminus transmembrane. This would result in the reorientation of E2 C-terminus from lumenal to cytoplasmic side. Post-translationally, N-glycosylated. In terms of processing, palmitoylated via thioester bonds.

The protein resides in the virion. It is found in the host cytoplasm. It localises to the host cell membrane. The protein localises to the host nucleus. Its subcellular location is the virion membrane. The protein resides in the host Golgi apparatus. It is found in the host trans-Golgi network. It localises to the host endoplasmic reticulum. It catalyses the reaction Autocatalytic release of the core protein from the N-terminus of the togavirus structural polyprotein by hydrolysis of a -Trp-|-Ser- bond.. Forms an icosahedral capsid with a T=4 symmetry composed of 240 copies of the capsid protein surrounded by a lipid membrane through which penetrate 80 spikes composed of trimers of E1-E2 heterodimers. The capsid protein binds to the viral RNA genome at a site adjacent to a ribosome binding site for viral genome translation following genome release. Possesses a protease activity that results in its autocatalytic cleavage from the nascent structural protein. Following its self-cleavage, the capsid protein transiently associates with ribosomes, and within several minutes the protein binds to viral RNA and rapidly assembles into icosahedric core particles. The resulting nucleocapsid eventually associates with the cytoplasmic domain of the spike glycoprotein E2 at the cell membrane, leading to budding and formation of mature virions. In case of infection, new virions attach to target cells and after clathrin-mediated endocytosis their membrane fuses with the host endosomal membrane. This leads to the release of the nucleocapsid into the cytoplasm, followed by an uncoating event necessary for the genomic RNA to become accessible. The uncoating might be triggered by the interaction of capsid proteins with ribosomes. Binding of ribosomes would release the genomic RNA since the same region is genomic RNA-binding and ribosome-binding. Specifically inhibits interleukin-1 receptor-associated kinase 1/IRAK1-dependent signaling during viral entry, representing a means by which the alphaviruses may evade innate immune detection and activation prior to viral gene expression. Functionally, provides the signal sequence for the translocation of the precursor of protein E3/E2 to the host endoplasmic reticulum. Furin-cleaved E3 remains associated with spike glycoprotein E1 and mediates pH protection of the latter during the transport via the secretory pathway. After virion release from the host cell, the assembly protein E3 is gradually released in the extracellular space. Its function is as follows. Plays a role in viral attachment to target host cell, by binding to the cell receptor MXRA8. Synthesized as a p62 precursor which is processed by furin at the cell membrane just before virion budding, giving rise to E2-E1 heterodimer. The p62-E1 heterodimer is stable, whereas E2-E1 is unstable and dissociate at low pH. p62 is processed at the last step, presumably to avoid E1 fusion activation before its final export to cell surface. E2 C-terminus contains a transitory transmembrane that would be disrupted by palmitoylation, resulting in reorientation of the C-terminal tail from lumenal to cytoplasmic side. This step is critical since E2 C-terminus is involved in budding by interacting with capsid proteins. This release of E2 C-terminus in cytoplasm occurs lately in protein export, and precludes premature assembly of particles at the endoplasmic reticulum membrane. In terms of biological role, acts as a viroporin that participates in virus glycoprotein processing and transport to the plasma membrane, cell permeabilization and budding of viral particles. Disrupts the calcium homeostasis of the cell, probably at the endoplasmic reticulum level. This leads to cytoplasmic calcium elevation. Because of its lipophilic properties, the 6K protein is postulated to influence the selection of lipids that interact with the transmembrane domains of the glycoproteins, which, in turn, affects the deformability of the bilayer required for the extreme curvature that occurs as budding proceeds. Present in low amount in virions, about 3% compared to viral glycoproteins. Class II viral fusion protein. Fusion activity is inactive as long as E1 is bound to E2 in mature virion. After virus attachment to target cell via host MXRA8 and endocytosis, acidification of the endosome induce dissociation of E1/E2 heterodimer and concomitant trimerization of the E1 subunits. This E1 trimer is fusion active, and promotes release of viral nucleocapsid in cytoplasm after endosome and viral membrane fusion. Efficient fusion requires the presence of cholesterol and sphingolipid in the target membrane. This O'nyong-nyong virus (strain Gulu) (ONNV) protein is Structural polyprotein.